We begin with the raw amino-acid sequence, 218 residues long: Small ribosomal subunit protein uS3c (218 aa).

Positions 47-118 (VYKNIRNSSN…KLRMTLTEVT (72 aa)) constitute a KH type-2 domain.

This sequence belongs to the universal ribosomal protein uS3 family. Part of the 30S ribosomal subunit.

It is found in the plastid. It localises to the chloroplast. The protein is Small ribosomal subunit protein uS3c (rps3) of Physcomitrium patens (Spreading-leaved earth moss).